An 84-amino-acid chain; its full sequence is Small ribosomal subunit protein uS15 (84 aa).

The protein belongs to the universal ribosomal protein uS15 family. In terms of assembly, part of the 30S ribosomal subunit. Forms a bridge to the 50S subunit in the 70S ribosome, contacting the 23S rRNA.

In terms of biological role, one of the primary rRNA binding proteins, it binds directly to 16S rRNA where it helps nucleate assembly of the platform of the 30S subunit by binding and bridging several RNA helices of the 16S rRNA. Functionally, forms an intersubunit bridge (bridge B4) with the 23S rRNA of the 50S subunit in the ribosome. The chain is Small ribosomal subunit protein uS15 from Fervidobacterium nodosum (strain ATCC 35602 / DSM 5306 / Rt17-B1).